Here is a 384-residue protein sequence, read N- to C-terminus: Galactokinase (384 aa).

34 to 37 contacts substrate; the sequence is EHTD. 123-129 is an ATP binding site; that stretch reads SSGLSSS. 2 residues coordinate Mg(2+): serine 129 and glutamate 161. Aspartate 173 functions as the Proton acceptor in the catalytic mechanism. Tyrosine 222 is a binding site for substrate.

Belongs to the GHMP kinase family. GalK subfamily.

The protein localises to the cytoplasm. It carries out the reaction alpha-D-galactose + ATP = alpha-D-galactose 1-phosphate + ADP + H(+). It participates in carbohydrate metabolism; galactose metabolism. In terms of biological role, catalyzes the transfer of the gamma-phosphate of ATP to D-galactose to form alpha-D-galactose-1-phosphate (Gal-1-P). The sequence is that of Galactokinase from Haemophilus influenzae (strain ATCC 51907 / DSM 11121 / KW20 / Rd).